Here is a 341-residue protein sequence, read N- to C-terminus: Fructose-1,6-bisphosphatase, cytosolic (341 aa).

Positions 100, 121, 123, and 124 each coordinate Mg(2+). Substrate is bound by residues 124 to 127 (DGSS), Asn-215, Tyr-247, Tyr-267, and Lys-277. Glu-283 contacts Mg(2+).

Belongs to the FBPase class 1 family. Mg(2+) serves as cofactor.

It localises to the cytoplasm. The enzyme catalyses beta-D-fructose 1,6-bisphosphate + H2O = beta-D-fructose 6-phosphate + phosphate. This chain is Fructose-1,6-bisphosphatase, cytosolic (FBPban1), found in Musa acuminata (Banana).